Reading from the N-terminus, the 425-residue chain is UPF0761 membrane protein XC_3370 (425 aa).

Helical transmembrane passes span 48 to 68 (VFAL…FPAF), 105 to 125 (FTVA…HSIE), 154 to 174 (GTML…LPLF), 182 to 202 (LAEF…IVLI), 216 to 236 (ALPG…GFGF), and 250 to 270 (ALSA…SVLL).

This sequence belongs to the UPF0761 family.

The protein resides in the cell inner membrane. The sequence is that of UPF0761 membrane protein XC_3370 from Xanthomonas campestris pv. campestris (strain 8004).